A 126-amino-acid chain; its full sequence is Profilin-3 (126 aa).

The protein belongs to the profilin family. Occurs in many kinds of cells as a complex with monomeric actin in a 1:1 ratio.

The protein localises to the cytoplasm. The protein resides in the cytoskeleton. Binds to actin and affects the structure of the cytoskeleton. At high concentrations, profilin prevents the polymerization of actin, whereas it enhances it at low concentrations. By binding to PIP2, it inhibits the formation of IP3 and DG. The polypeptide is Profilin-3 (proC) (Dictyostelium discoideum (Social amoeba)).